We begin with the raw amino-acid sequence, 206 residues long: Small ribosomal subunit protein uS4 (206 aa).

An S4 RNA-binding domain is found at 96–158; it reads GRLDNVVYRM…AKQQSRIKAA (63 aa).

The protein belongs to the universal ribosomal protein uS4 family. In terms of assembly, part of the 30S ribosomal subunit. Contacts protein S5. The interaction surface between S4 and S5 is involved in control of translational fidelity.

One of the primary rRNA binding proteins, it binds directly to 16S rRNA where it nucleates assembly of the body of the 30S subunit. Functionally, with S5 and S12 plays an important role in translational accuracy. The sequence is that of Small ribosomal subunit protein uS4 from Vibrio atlanticus (strain LGP32) (Vibrio splendidus (strain Mel32)).